The primary structure comprises 525 residues: Bifunctional purine biosynthesis protein PurH (525 aa).

In terms of domain architecture, MGS-like spans 1 to 148; that stretch reads MPSNNLIKNA…KNYKNVIVIV (148 aa).

The protein belongs to the PurH family.

It catalyses the reaction (6R)-10-formyltetrahydrofolate + 5-amino-1-(5-phospho-beta-D-ribosyl)imidazole-4-carboxamide = 5-formamido-1-(5-phospho-D-ribosyl)imidazole-4-carboxamide + (6S)-5,6,7,8-tetrahydrofolate. The enzyme catalyses IMP + H2O = 5-formamido-1-(5-phospho-D-ribosyl)imidazole-4-carboxamide. Its pathway is purine metabolism; IMP biosynthesis via de novo pathway; 5-formamido-1-(5-phospho-D-ribosyl)imidazole-4-carboxamide from 5-amino-1-(5-phospho-D-ribosyl)imidazole-4-carboxamide (10-formyl THF route): step 1/1. The protein operates within purine metabolism; IMP biosynthesis via de novo pathway; IMP from 5-formamido-1-(5-phospho-D-ribosyl)imidazole-4-carboxamide: step 1/1. The protein is Bifunctional purine biosynthesis protein PurH of Buchnera aphidicola subsp. Acyrthosiphon pisum (strain APS) (Acyrthosiphon pisum symbiotic bacterium).